The primary structure comprises 221 residues: GTP cyclohydrolase III (221 aa).

It belongs to the archaeal-type GTP cyclohydrolase family.

The enzyme catalyses GTP + 3 H2O = 2-amino-5-formylamino-6-(5-phospho-D-ribosylamino)pyrimidin-4(3H)-one + 2 phosphate + 2 H(+). Catalyzes the formation of 2-amino-5-formylamino-6-ribofuranosylamino-4(3H)-pyrimidinone ribonucleotide monophosphate and inorganic phosphate from GTP. Also has an independent pyrophosphate phosphohydrolase activity. This is GTP cyclohydrolase III from Pyrobaculum aerophilum (strain ATCC 51768 / DSM 7523 / JCM 9630 / CIP 104966 / NBRC 100827 / IM2).